We begin with the raw amino-acid sequence, 360 residues long: MALHSMRKARERWSFIRALHKGSAAAPALQKDSKKRVFSGIQPTGILHLGNYLGAIESWVRLQDEYDSVLYSIVDLHSITVPQDPAVLRQSILDMTAVLLACGINPEKSILFQQSQVSEHTQLSWILSCMVRLPRLQHLHQWKAKTTKQKHDGTVGLLTYPVLQAADILLYKSTHVPVGEDQVQHMELVQDLAQGFNKKYGEFFPVPESILTSMKKVKSLRDPSAKMSKSDPDKLATVRITDSPEEIVQKFRKAVTDFTSEVTYDPAGRAGVSNIVAVHAAVTGLSVEEVVRRSAGMNTARYKLAVADAVIEKFAPIKREIEKLKLDKDHLEKVLQIGSAKAKELAYTVCQEVKKLVGFL.

A mitochondrion-targeting transit peptide spans 1 to 18; it reads MALHSMRKARERWSFIRA. Residues Gln-42 and 48-51 each bind ATP; that span reads HLGN. An L-tryptophan-binding site is contributed by Asp-167. ATP is bound by residues 179–181, Val-217, and 226–230; these read GED and KMSKS.

Belongs to the class-I aminoacyl-tRNA synthetase family. In terms of tissue distribution, brain.

The protein localises to the mitochondrion matrix. It is found in the mitochondrion. It carries out the reaction tRNA(Trp) + L-tryptophan + ATP = L-tryptophyl-tRNA(Trp) + AMP + diphosphate + H(+). Catalyzes the attachment of tryptophan to tRNA(Trp) in a two-step reaction: tryptophan is first activated by ATP to form Trp-AMP and then transferred to the acceptor end of tRNA(Trp). This Homo sapiens (Human) protein is Tryptophan--tRNA ligase, mitochondrial (WARS2).